The primary structure comprises 444 residues: Trimethylamine monooxygenase (444 aa).

FAD-binding residues include Cys-12, Glu-37, Gln-39, Leu-45, and Trp-46. Positions 70 and 72 each coordinate NADP(+). 2 residues coordinate FAD: Asn-72 and Val-125. NADP(+) contacts are provided by Tyr-170, Ser-202, Ser-203, Ser-205, Arg-226, His-227, and Asn-288. Gln-315 and Thr-318 together coordinate FAD. Position 409 (Arg-409) interacts with NADP(+).

The protein belongs to the FMO family. Homodimer. FAD is required as a cofactor.

The enzyme catalyses trimethylamine + NADPH + O2 = trimethylamine N-oxide + NADP(+) + H2O. Catalyzes the oxidation of trimethylamine (TMA) to produce trimethylamine N-oxide (TMAO). In vitro, has a broad substrate specificity, oxidizing many nitrogen- and sulfur-containing compounds, including dimethylamine (DMA), dimethylsulfide (DMS), dimethylsulfoxide (DMSO) and methimazole. TMA shows the highest affinity. The protein is Trimethylamine monooxygenase of Pelagibacter sp. (strain HTCC7211).